Here is a 733-residue protein sequence, read N- to C-terminus: MSDKKGEEITLRVAEAFYRDVGRGVARIDPAVMEKYGLQSGDIIEIIGKSTVPAIVWPSYPEDRGTGIIRIDGSIRSNAGVGIDDKVRIRKVTAKPAEKVTLAPTEPVRLMGGEAYLLRLLEGRPVIKGQKIRVEVFGHTLTFVITATRPSGVVVVTRNTAIELKEKPAEEVKRAVPDVTYEDIGGLKRELRLVREMIELPLKHPELFQRLGIEPPKGVLLYGPPGTGKTLIAKAVANEVDAHFIPISGPEIMSKYYGESEQRLREIFEEAKENAPSIIFIDEIDSIAPKREEVTGEVERRVVAQLLALMDGLEARGDVIVIAATNRPDAIDPALRRPGRFDREIEIGVPDKEGRKEILEIHTRKMPLAEDVDLEELAELTNGFVGADLEALCKEAAMHALRRVLPEIDIEAEEIPAEVIENLKVTREDFMEALKNIEPSAMREVLVEVPNVKWEDIGGLEHAKQELMEAVEWPLKYPEVFRAANIKPPRGILLFGPPGTGKTLLAKAVANESNANFISVKGPELLSKWVGESEKHVREMFRKARQVAPCVIFFDEIDSLAPRRGGIGDSHVTERVVSQLLTELDGLEELKDVVVIAATNRPDMIDPALLRPGRLERHIYIPPPDKKARVEIFKIHLRGKPLADDVNIEELAEKTEGYSGADIEAVCREAGMLAIRELIKPGMTREEAKEAAKKLKITKKHFEEALKKVRPSLTKEDVEKYEKLIEDFHRMYA.

Residues 223-230 (GPPGTGKT) and 496-503 (GPPGTGKT) contribute to the ATP site.

Belongs to the AAA ATPase family. CDC48 subfamily.

This is Cell division cycle protein 48 homolog AF_1297 from Archaeoglobus fulgidus (strain ATCC 49558 / DSM 4304 / JCM 9628 / NBRC 100126 / VC-16).